A 1381-amino-acid chain; its full sequence is DNA-directed RNA polymerase subunit beta (1381 aa).

It belongs to the RNA polymerase beta chain family. In terms of assembly, the RNAP catalytic core consists of 2 alpha, 1 beta, 1 beta' and 1 omega subunit. When a sigma factor is associated with the core the holoenzyme is formed, which can initiate transcription.

The catalysed reaction is RNA(n) + a ribonucleoside 5'-triphosphate = RNA(n+1) + diphosphate. Functionally, DNA-dependent RNA polymerase catalyzes the transcription of DNA into RNA using the four ribonucleoside triphosphates as substrates. This Halorhodospira halophila (strain DSM 244 / SL1) (Ectothiorhodospira halophila (strain DSM 244 / SL1)) protein is DNA-directed RNA polymerase subunit beta.